Consider the following 101-residue polypeptide: Interleukin-8 (101 aa).

An N-terminal signal peptide occupies residues 1–22 (MTSKLAVALLAAFLLSAALCEG). At arginine 27 the chain carries Citrulline. Disulfide bonds link cysteine 34-cysteine 61 and cysteine 36-cysteine 77.

This sequence belongs to the intercrine alpha (chemokine CxC) family. Homodimer. Interacts with TNFAIP6 (via Link domain); this interaction interferes with chemokine binding to glycosaminoglycans. Citrullination at Arg-27 prevents proteolysis, and dampens tissue inflammation, it also enhances leukocytosis, possibly through impaired chemokine clearance from the blood circulation.

Its subcellular location is the secreted. Its function is as follows. Chemotactic factor that mediates inflammatory response by attracting neutrophils, basophils, and T-cells to clear pathogens and protect the host from infection. Also plays an important role in neutrophil activation. Released in response to an inflammatory stimulus, exerts its effect by binding to the G-protein-coupled receptors CXCR1 and CXCR2, primarily found in neutrophils, monocytes and endothelial cells. G-protein heterotrimer (alpha, beta, gamma subunits) constitutively binds to CXCR1/CXCR2 receptor and activation by IL8 leads to beta and gamma subunits release from Galpha (GNAI2 in neutrophils) and activation of several downstream signaling pathways including PI3K and MAPK pathways. The chain is Interleukin-8 (CXCL8) from Cercocebus atys (Sooty mangabey).